The following is a 243-amino-acid chain: Vimentin A2 (243 aa).

Residues 1–22 (GFSLQDELDFLKKLHDEELADV) form a coil 1B region. The 188-residue stretch at 1 to 188 (GFSLQDELDF…KLLEGEESRI (188 aa)) folds into the IF rod domain. The tract at residues 23-45 (QAQIQDQQVQVDMDMAKPDLTAA) is linker 12. The segment at 46-184 (LRDVRLQYEN…ATYRKLLEGE (139 aa)) is coil 2. A tail region spans residues 185–243 (ESRITTPLPNLSSFNLRDAILETKPILENTFSKKVLIKTIETRDGEVINESTQNHDDLE).

The protein belongs to the intermediate filament family. Homomer. In terms of processing, one of the most prominent phosphoproteins in various cells of mesenchymal origin. Phosphorylation is enhanced during cell division, at which time vimentin filaments are significantly reorganized. Expressed in low amounts in retina, optic nerve, and brain and in higher amounts in spinal cord.

Functionally, vimentins are class-III intermediate filaments found in various non-epithelial cells, especially mesenchymal cells. Vimentin is attached to the nucleus, endoplasmic reticulum, and mitochondria, either laterally or terminally. This chain is Vimentin A2, found in Carassius auratus (Goldfish).